Here is a 315-residue protein sequence, read N- to C-terminus: GTP cyclohydrolase MptA 1 (315 aa).

The protein belongs to the GTP cyclohydrolase IV family. In terms of assembly, homodimer. Requires Fe(2+) as cofactor.

The enzyme catalyses GTP + H2O = 7,8-dihydroneopterin 2',3'-cyclic phosphate + formate + diphosphate + H(+). Its pathway is cofactor biosynthesis; 5,6,7,8-tetrahydromethanopterin biosynthesis. Its function is as follows. Converts GTP to 7,8-dihydro-D-neopterin 2',3'-cyclic phosphate, the first intermediate in the biosynthesis of coenzyme methanopterin. The sequence is that of GTP cyclohydrolase MptA 1 from Methanocella arvoryzae (strain DSM 22066 / NBRC 105507 / MRE50).